Here is a 474-residue protein sequence, read N- to C-terminus: uncharacterized protein (474 aa).

Helical transmembrane passes span 17 to 39 (ILGG…SVYY), 44 to 61 (FLNF…GFVL), 81 to 103 (LAWL…YFSY), 144 to 166 (GVGI…YLLY), 186 to 208 (IIWI…GLSF), 239 to 256 (IVMI…FSIH), 268 to 286 (IQTK…IISI), 319 to 341 (LSLF…TGGV), 385 to 407 (AFVV…IALG), and 444 to 466 (IIAM…TLYF).

This sequence belongs to the TrkH potassium transport family.

Its subcellular location is the cell membrane. This is an uncharacterized protein from Methanocaldococcus jannaschii (strain ATCC 43067 / DSM 2661 / JAL-1 / JCM 10045 / NBRC 100440) (Methanococcus jannaschii).